The sequence spans 352 residues: Neutral protease 2 homolog ATEG_04941 (352 aa).

The first 19 residues, 1 to 19 (MRFTALATAILPLACNVLA), serve as a signal peptide directing secretion. A propeptide spanning residues 20-175 (LPAKTGEAPK…ASAVKPLDKR (156 aa)) is cleaved from the precursor. Cystine bridges form between Cys-181–Cys-253 and Cys-260–Cys-278. Position 303 (His-303) interacts with Zn(2+). Glu-304 is an active-site residue. Zn(2+) is bound by residues His-307 and Asp-318.

Belongs to the peptidase M35 family. It depends on Zn(2+) as a cofactor.

The protein localises to the secreted. The catalysed reaction is Preferential cleavage of bonds with hydrophobic residues in P1'. Also 3-Asn-|-Gln-4 and 8-Gly-|-Ser-9 bonds in insulin B chain.. Functionally, secreted metalloproteinase that allows assimilation of proteinaceous substrates. Shows high activities on basic nuclear substrates such as histone and protamine. The protein is Neutral protease 2 homolog ATEG_04941 of Aspergillus terreus (strain NIH 2624 / FGSC A1156).